The primary structure comprises 846 residues: Translation initiation factor IF-2 (846 aa).

The disordered stretch occupies residues 94–263 (QRSPEEIQAE…HGFQNPTGPV (170 aa)). Residues 96-135 (SPEEIQAEQKRELDERRAAENAARDKVEAEVRQRNEEQAR) are compositionally biased toward basic and acidic residues. 2 stretches are compositionally biased toward low complexity: residues 136-148 (RQAA…APAP) and 158-176 (AAPV…ASED). Composition is skewed to basic and acidic residues over residues 177–206 (AAAR…RGEA) and 230–239 (TTDEESDGAR). A compositionally biased stretch (basic residues) spans 240 to 253 (RGRGGKSKLKKRNQ). In terms of domain architecture, tr-type G spans 346 to 513 (SRAPVVTVMG…AVLLQAEILE (168 aa)). A G1 region spans residues 355–362 (GHVDHGKT). Position 355-362 (355-362 (GHVDHGKT)) interacts with GTP. The tract at residues 380–384 (GITQH) is G2. The tract at residues 401–404 (DTPG) is G3. Residues 401 to 405 (DTPGH) and 455 to 458 (NKID) each bind GTP. The tract at residues 455–458 (NKID) is G4. The G5 stretch occupies residues 491 to 493 (SAK).

The protein belongs to the TRAFAC class translation factor GTPase superfamily. Classic translation factor GTPase family. IF-2 subfamily.

Its subcellular location is the cytoplasm. Its function is as follows. One of the essential components for the initiation of protein synthesis. Protects formylmethionyl-tRNA from spontaneous hydrolysis and promotes its binding to the 30S ribosomal subunits. Also involved in the hydrolysis of GTP during the formation of the 70S ribosomal complex. The sequence is that of Translation initiation factor IF-2 from Pseudomonas putida (strain ATCC 47054 / DSM 6125 / CFBP 8728 / NCIMB 11950 / KT2440).